Reading from the N-terminus, the 928-residue chain is Diacylglycerol kinase zeta (928 aa).

A compositionally biased stretch (basic and acidic residues) spans 1–14 (MEPRDGSPEARSSD). 2 disordered regions span residues 1–46 (MEPR…RRFP) and 59–82 (KSGLQHLAPPPPTPGAPCSESERQ). Residues 15 to 24 (SESASASSSG) show a composition bias toward low complexity. Over residues 25-37 (SERDAGPEPDKAP) the composition is skewed to basic and acidic residues. Phorbol-ester/DAG-type zinc fingers lie at residues 98–152 (HIWF…NFRC) and 172–230 (HHWV…EEPC). A disordered region spans residues 251-280 (PQNTLKASKKKKRASFKRKSSKKGPEEGRW). Over residues 257-272 (ASKKKKRASFKRKSSK) the composition is skewed to basic residues. The tract at residues 259–273 (KKKKRASFKRKSSKK) is MARCKS homology. The mediates interaction with RASGRP1 stretch occupies residues 278 to 416 (GRWRPFIIRP…HVEEGNVVQL (139 aa)). The DAGKc domain occupies 291–425 (PLMKPLLVFV…LDRWDLHAEP (135 aa)). The Nuclear export signal motif lies at 361-369 (LSTLDQLRL). Residue S705 is modified to Phosphoserine. Residues 759–788 (ARPDLPTPTSPLPTSPCSPTPRSLQGDAAP) are disordered. The segment covering 763–777 (LPTPTSPLPTSPCSP) has biased composition (pro residues). The residue at position 781 (S781) is a Phosphoserine. ANK repeat units lie at residues 822–852 (QSRTLLHHAVSTGSKDVVRYLLDHAPPEILD) and 857–886 (NGETCLHQAAALGQRTICHYIVEAGASLMK). A PDZ-binding motif is present at residues 924 to 928 (QETAV).

It belongs to the eukaryotic diacylglycerol kinase family. Interacts (via PDZ-binding motif) with the PDZ domain of the syntrophin SNTG1 and that of SNX27. Interacts with IRS1 in the absence of insulin; insulin stimulation decreases this interaction. Found in a ternary complex with IRS1 and PIP5K1A in the absence of insulin. Interacts with PIP5K1A. As to quaternary structure, forms a signaling complex with RASGRP1 and HRAS. Phosphorylation of the MARCKS homology domain by PKC reduces nuclear accumulation of DGK-zeta. In terms of tissue distribution, highest levels in brain, and substantial levels in skeletal muscle, heart, and pancreas. As to expression, predominantly expressed in muscle.

The protein localises to the nucleus. It localises to the cytoplasm. The protein resides in the cytosol. It is found in the cell membrane. Its subcellular location is the cell projection. The protein localises to the lamellipodium. It carries out the reaction a 1,2-diacyl-sn-glycerol + ATP = a 1,2-diacyl-sn-glycero-3-phosphate + ADP + H(+). The catalysed reaction is a 1-O-alkyl-sn-glycerol + ATP = a 1-O-alkyl-sn-glycero-3-phosphate + ADP + H(+). The enzyme catalyses 1-O-alkyl-2-acyl-sn-glycerol + ATP = 1-O-alkyl-2-acyl-sn-glycero-3-phosphate + ADP + H(+). It catalyses the reaction 1,2-didecanoyl-sn-glycerol + ATP = 1,2-didecanoyl-sn-glycero-3-phosphate + ADP + H(+). It carries out the reaction 1,2-ditetradecanoyl-sn-glycerol + ATP = 1,2-ditetradecanoyl-sn-glycero-3-phosphate + ADP + H(+). The catalysed reaction is 1-hexadecanoyl-2-(9Z-octadecenoyl)-sn-glycerol + ATP = 1-hexadecanoyl-2-(9Z-octadecenoyl)-sn-glycero-3-phosphate + ADP + H(+). The enzyme catalyses 1-hexadecanoyl-2-(5Z,8Z,11Z,14Z-eicosatetraenoyl)-sn-glycerol + ATP = 1-hexadecanoyl-2-(5Z,8Z,11Z,14Z-eicosatetraenoyl)-sn-glycero-3-phosphate + ADP + H(+). It catalyses the reaction 1-octadecanoyl-2-(9Z-octadecenoyl)-sn-glycerol + ATP = 1-octadecanoyl-2-(9Z-octadecenoyl)-sn-glycero-3-phosphate + ADP + H(+). It carries out the reaction 1-octadecanoyl-2-(5Z,8Z,11Z,14Z-eicosatetraenoyl)-sn-glycerol + ATP = 1-octadecanoyl-2-(5Z,8Z,11Z,14Z-eicosatetraenoyl)-sn-glycero-3-phosphate + ADP + H(+). The catalysed reaction is 1-octadecanoyl-2-(4Z,7Z,10Z,13Z,16Z,19Z-docosahexaenoyl)-sn-glycerol + ATP = 1-octadecanoyl-2-(4Z,7Z,10Z,13Z,16Z,19Z-docosahexaenoyl)-sn-glycero-3-phosphate + ADP + H(+). The enzyme catalyses 1,2-di-(9Z-octadecenoyl)-sn-glycerol + ATP = 1,2-di-(9Z-octadecenoyl)-sn-glycero-3-phosphate + ADP + H(+). It catalyses the reaction 1-(9Z-octadecenoyl)-2-hexadecanoyl-sn-glycerol + ATP = 1-(9Z)-octadecenoyl-2-hexadecanoyl-sn-glycero-3-phosphate + ADP + H(+). It carries out the reaction 1-eicosanoyl-2-(5Z,8Z,11Z,14Z)-eicosatetraenoyl-sn-glycerol + ATP = 1-eicosanoyl-2-(5Z,8Z,11Z,14Z)-eicosatetraenoyl-sn-glycero-3-phosphate + ADP + H(+). The catalysed reaction is 1,2-di-(5Z,8Z,11Z,14Z)-eicosatetraenoyl-sn-glycerol + ATP = 1,2-di-(5Z,8Z,11Z,14Z)-eicosatetraenoyl-sn-glycero-3-phosphate + ADP + H(+). The enzyme catalyses 1-O-hexadecyl-2-acetyl-sn-glycerol + ATP = 1-O-hexadecyl-2-acetyl-sn-glycero-3-phosphate + ADP + H(+). It catalyses the reaction 1-O-hexadecyl-2-(5Z,8Z,11Z,14Z-eicosatetraenoyl)-sn-glycerol + ATP = 1-O-hexadecyl-2-(5Z,8Z,11Z,14Z-eicosatetraenoyl)-sn-glycero-3-phosphate + ADP + H(+). It carries out the reaction 1-O-hexadecyl-2-(9Z-octadecenoyl)-sn-glycerol + ATP = 1-O-hexadecyl-2-(9Z-octadecenoyl)-sn-glycero-3-phosphate + ADP + H(+). The catalysed reaction is 1-O-hexadecyl-sn-glycerol + ATP = 1-O-hexadecyl-sn-glycero-3-phosphate + ADP + H(+). The protein operates within lipid metabolism; glycerolipid metabolism. Activated by 1,2-diacyl-sn-glycero-3-phosphate/phosphatidic acid irrespective of its acyl chain composition. Diacylglycerol kinase that converts diacylglycerol/DAG into phosphatidic acid/phosphatidate/PA and regulates the respective levels of these two bioactive lipids. Thereby, acts as a central switch between the signaling pathways activated by these second messengers with different cellular targets and opposite effects in numerous biological processes. Also plays an important role in the biosynthesis of complex lipids. Does not exhibit an acyl chain-dependent substrate specificity among diacylglycerol species. Can also phosphorylate 1-alkyl-2-acylglycerol in vitro but less efficiently and with a preference for alkylacylglycerols containing an arachidonoyl group. The biological processes it is involved in include T cell activation since it negatively regulates T-cell receptor signaling which is in part mediated by diacylglycerol. By generating phosphatidic acid, stimulates PIP5KIA activity which regulates actin polymerization. Through the same mechanism could also positively regulate insulin-induced translocation of SLC2A4 to the cell membrane. Its function is as follows. Regulates RASGRP1 activity. In terms of biological role, does not regulate RASGRP1 activity. The sequence is that of Diacylglycerol kinase zeta from Homo sapiens (Human).